The chain runs to 1073 residues: Activated Cdc42 kinase Ack (1073 aa).

The interval 88 to 110 is disordered; it reads IGGGKQPSSKKQSSAARESSQGN. A Protein kinase domain is found at 123 to 383; it reads ITMGLKLGDG…PTFAALKEYL (261 aa). ATP contacts are provided by residues 129 to 137 and K156; that span reads LGDGSFGVV. The active-site Proton acceptor is the D250. An SH3 domain is found at 386-446; that stretch reads MSPPVMRASR…PRNLLEQRKV (61 aa). Disordered regions lie at residues 484–506, 803–834, and 862–882; these read QRKC…SSKQ, PLKN…VEAA, and AQPP…HQQQ. The segment covering 812-826 has biased composition (low complexity); it reads SVHSNHSSPSSTASP. Residues 1029–1072 enclose the UBA domain; that stretch reads GLATRHYKIDQLARLGVAGRPQCEQALQQTNWSLEVAAELLLNA.

This sequence belongs to the protein kinase superfamily. Tyr protein kinase family. Interacts with yki and ex. Interacts with drk. Likely to be a member of an axonal guidance receptor complex that includes SH3PX1, dock and Dscam. Interacts (via N-terminus) with dock. Interacts with SH3PX1 (via SH3 domain). Requires Mg(2+) as cofactor. Post-translationally, phosphorylated. Autophosphorylated. In terms of tissue distribution, detected in ovaries (at protein level). In adults, relatively higher expression in the head compared to the body.

It localises to the cytoplasm. The protein localises to the cytoplasmic vesicle. It is found in the clathrin-coated vesicle. The enzyme catalyses L-tyrosyl-[protein] + ATP = O-phospho-L-tyrosyl-[protein] + ADP + H(+). It catalyses the reaction L-threonyl-[protein] + ATP = O-phospho-L-threonyl-[protein] + ADP + H(+). Its function is as follows. Non-receptor tyrosine-protein and serine/threonine-protein kinase that is implicated in diverse biological functions such as cell survival, cell differentiation, cell growth and proliferation. Phosphorylates SH3PX1 and ex. Phosphorylates SH3PX1 predominantly on 'Tyr-56', which likely promotes the recruitment of SH3PX1 to an axonal guidance receptor complex that includes dock and Dscam; because phosphorylation of SH3PX1 increases its interaction with the complex member dock while decreasing its interaction with the actin cytoskeleton modulator WASp. In the wing and eye, promotes tissue growth, and during embryogenesis coordinates cell shape changes required for correct dorsal closure. Functions in the negative regulation of the Hippo/SWH (Sav/Wts/Hpo) signaling pathway by enhancing yki activity thereby promoting cell proliferation and inhibiting apoptosis. This is accomplished, at least in part, by phosphorylating ex thereby reducing its ability to efficiently activate the Hippo signaling cascade. In the eye disk, wing disk and possibly spermatids, inhibits programmed cell death induced by hid and rpr through a mechanism that is independent of the MAP kinase signal transduction pathway. Essential for male and female fertility. During oogenesis required for the correct temporal assembly, and consequently the catalytic activity of long Ctps filaments (cytoophidium) in the germline nurse cells, likely by phosphorylating an unidentified substrate that is essential for linking individual Ctps filaments into large, catalytically active assemblies. The protein is Activated Cdc42 kinase Ack of Drosophila melanogaster (Fruit fly).